Reading from the N-terminus, the 341-residue chain is Ketol-acid reductoisomerase (NADP(+)) (341 aa).

The KARI N-terminal Rossmann domain occupies Met-1 to Thr-182. NADP(+) contacts are provided by residues Tyr-25 to Gln-28, Ser-51, Ser-53, and Asp-83 to Gln-86. His-108 is an active-site residue. Residue Gly-134 participates in NADP(+) binding. The KARI C-terminal knotted domain occupies Thr-183–Ile-328. Mg(2+)-binding residues include Asp-191, Glu-195, Glu-227, and Glu-231. Substrate is bound at residue Ser-252.

The protein belongs to the ketol-acid reductoisomerase family. Requires Mg(2+) as cofactor.

It catalyses the reaction (2R)-2,3-dihydroxy-3-methylbutanoate + NADP(+) = (2S)-2-acetolactate + NADPH + H(+). It carries out the reaction (2R,3R)-2,3-dihydroxy-3-methylpentanoate + NADP(+) = (S)-2-ethyl-2-hydroxy-3-oxobutanoate + NADPH + H(+). Its pathway is amino-acid biosynthesis; L-isoleucine biosynthesis; L-isoleucine from 2-oxobutanoate: step 2/4. The protein operates within amino-acid biosynthesis; L-valine biosynthesis; L-valine from pyruvate: step 2/4. Involved in the biosynthesis of branched-chain amino acids (BCAA). Catalyzes an alkyl-migration followed by a ketol-acid reduction of (S)-2-acetolactate (S2AL) to yield (R)-2,3-dihydroxy-isovalerate. In the isomerase reaction, S2AL is rearranged via a Mg-dependent methyl migration to produce 3-hydroxy-3-methyl-2-ketobutyrate (HMKB). In the reductase reaction, this 2-ketoacid undergoes a metal-dependent reduction by NADPH to yield (R)-2,3-dihydroxy-isovalerate. The protein is Ketol-acid reductoisomerase (NADP(+)) of Anaeromyxobacter dehalogenans (strain 2CP-C).